The following is a 104-amino-acid chain: MQRLCAYVLIHVLALAACSEASWKPGFQLQDASSGPGANRGKEPHELDRLGPASHHRRQLGLQGPPHLVADLAKKQGPWMEEEEEAYGWMDFGRRSAEEGDQRP.

The N-terminal stretch at 1-21 is a signal peptide; it reads MQRLCAYVLIHVLALAACSEA. Residues 22–58 constitute a propeptide that is removed on maturation; it reads SWKPGFQLQDASSGPGANRGKEPHELDRLGPASHHRR. The segment at 27–67 is disordered; that stretch reads FQLQDASSGPGANRGKEPHELDRLGPASHHRRQLGLQGPPH. The span at 40 to 49 shows a compositional bias: basic and acidic residues; the sequence is RGKEPHELDR. Gln59 is modified (pyrrolidone carboxylic acid; in form big gastrin). Gln76 bears the Pyrrolidone carboxylic acid; in form gastrin mark. At Tyr87 the chain carries Sulfotyrosine; partial. Residue Phe92 is modified to Phenylalanine amide. A Phosphoserine modification is found at Ser96. Positions 96-104 are excised as a propeptide; the sequence is SAEEGDQRP.

Belongs to the gastrin/cholecystokinin family. Post-translationally, sulfation enhances proteolytic processing, and blocks peptide degradation. Levels of sulfation differ between proteolytically-cleaved gastrins. Thus, gastrin-6 is almost 73% sulfated, whereas the larger gastrins are less than 50% sulfated. Sulfation levels are also tissue-specific.

It is found in the secreted. Gastrin stimulates the stomach mucosa to produce and secrete hydrochloric acid and the pancreas to secrete its digestive enzymes. It also stimulates smooth muscle contraction and increases blood circulation and water secretion in the stomach and intestine. The protein is Gastrin (GAST) of Sus scrofa (Pig).